Consider the following 556-residue polypeptide: Acetyl-coenzyme A thioesterase (556 aa).

One can recognise a HotDog ACOT-type 1 domain in the interval 6–118; sequence APGEVLMSQA…FSTFVAKPVG (113 aa). Lys34 is modified (N6-succinyllysine). CoA contacts are provided by residues 54-56 and 83-85; these read TAS and STS. Position 97 is an N6-succinyllysine (Lys97). Residue Arg145 participates in CoA binding. Lys160 and Lys229 each carry N6-succinyllysine. Positions 180–295 constitute a HotDog ACOT-type 2 domain; that stretch reads MGTSVQSIEL…FLIYNAVDDQ (116 aa). 235–237 provides a ligand contact to CoA; the sequence is KFR. The 210-residue stretch at 327–536 folds into the START domain; sequence GRKYVISHKK…GGWSKSIEEA (210 aa).

Homodimer or homotetramer.

The protein localises to the cytoplasm. The protein resides in the cytosol. The enzyme catalyses acetyl-CoA + H2O = acetate + CoA + H(+). It carries out the reaction butanoyl-CoA + H2O = butanoate + CoA + H(+). The catalysed reaction is hexanoyl-CoA + H2O = hexanoate + CoA + H(+). It functions in the pathway lipid metabolism; fatty acid metabolism. Allosterically regulated by ATP (activator) and ADP (inhibitor). Cold labile, it dissociates into inactive monomers at low temperature. Functionally, catalyzes the hydrolysis of acyl-CoAs into free fatty acids and coenzyme A (CoASH), regulating their respective intracellular levels. Preferentially hydrolyzes acetyl-CoA. In Mus musculus (Mouse), this protein is Acetyl-coenzyme A thioesterase (Acot12).